The primary structure comprises 227 residues: UPF0173 metal-dependent hydrolase BCE_4747 (227 aa).

The protein belongs to the UPF0173 family.

The polypeptide is UPF0173 metal-dependent hydrolase BCE_4747 (Bacillus cereus (strain ATCC 10987 / NRS 248)).